Consider the following 257-residue polypeptide: Isoprenyl transferase (257 aa).

Residue Asp-33 is part of the active site. Mg(2+) is bound at residue Asp-33. Residues 34 to 37, Trp-38, Arg-46, His-50, and 78 to 80 contribute to the substrate site; these read GNGR and STE. The active-site Proton acceptor is the Asn-81. Residues Trp-82, Arg-84, Arg-204, and 210 to 212 contribute to the substrate site; that span reads RLS. Residue Glu-223 participates in Mg(2+) binding.

Belongs to the UPP synthase family. As to quaternary structure, homodimer. Requires Mg(2+) as cofactor.

Its function is as follows. Catalyzes the condensation of isopentenyl diphosphate (IPP) with allylic pyrophosphates generating different type of terpenoids. In Clostridium acetobutylicum (strain ATCC 824 / DSM 792 / JCM 1419 / IAM 19013 / LMG 5710 / NBRC 13948 / NRRL B-527 / VKM B-1787 / 2291 / W), this protein is Isoprenyl transferase.